A 138-amino-acid chain; its full sequence is Small ribosomal subunit protein uS8c (138 aa).

This sequence belongs to the universal ribosomal protein uS8 family. As to quaternary structure, part of the 30S ribosomal subunit.

The protein localises to the plastid. It is found in the chloroplast. In terms of biological role, one of the primary rRNA binding proteins, it binds directly to 16S rRNA central domain where it helps coordinate assembly of the platform of the 30S subunit. The chain is Small ribosomal subunit protein uS8c (rps8) from Chlorella vulgaris (Green alga).